The chain runs to 87 residues: Transcriptional regulator PINT87aa (87 aa).

As to quaternary structure, interacts with PAF1 complex member PAF1. Interacts with transcription factor FOXM1. In terms of tissue distribution, expressed in brain, liver, kidney and stomach with lower levels in breast, intestine, thyroid and pancreas.

It is found in the nucleus. Enhances the binding of the PAF1 complex to target gene promoters and plays a role in negative regulation of transcription. May function as an anchor to keep the PAF1 complex on target gene promoters, sequentially pausing RNA polymerase II-induced mRNA elongation. Inhibits FOXM1-mediated transcription of PHB2. This is Transcriptional regulator PINT87aa from Homo sapiens (Human).